We begin with the raw amino-acid sequence, 606 residues long: DNA primase (606 aa).

The CHC2-type zinc-finger motif lies at 40-64; sequence CPFHQEKTPSFYVVPEKRFYFCHGC. Residues 256–349 form the Toprim domain; the sequence is KAAVLVEGYF…DPDTFARREG (94 aa). Mg(2+) contacts are provided by glutamate 262, aspartate 307, and aspartate 309. Residues 429–451 are disordered; the sequence is VPLPKPAGGDAPPSSPNRPAPPL. The span at 441-451 shows a compositional bias: pro residues; sequence PSSPNRPAPPL.

The protein belongs to the DnaG primase family. As to quaternary structure, monomer. Interacts with DnaB. The cofactor is Zn(2+). Mg(2+) is required as a cofactor.

The catalysed reaction is ssDNA + n NTP = ssDNA/pppN(pN)n-1 hybrid + (n-1) diphosphate.. Functionally, RNA polymerase that catalyzes the synthesis of short RNA molecules used as primers for DNA polymerase during DNA replication. The sequence is that of DNA primase from Myxococcus xanthus.